The chain runs to 366 residues: Erythronate-4-phosphate dehydrogenase (366 aa).

Residues S46 and T67 each coordinate substrate. NAD(+) is bound by residues D147 and T175. The active site involves R208. Residue D228 participates in NAD(+) binding. Residue E233 is part of the active site. H250 acts as the Proton donor in catalysis. G253 contacts NAD(+). Substrate is bound at residue Y254.

Belongs to the D-isomer specific 2-hydroxyacid dehydrogenase family. PdxB subfamily. In terms of assembly, homodimer.

It localises to the cytoplasm. It carries out the reaction 4-phospho-D-erythronate + NAD(+) = (R)-3-hydroxy-2-oxo-4-phosphooxybutanoate + NADH + H(+). It participates in cofactor biosynthesis; pyridoxine 5'-phosphate biosynthesis; pyridoxine 5'-phosphate from D-erythrose 4-phosphate: step 2/5. Its function is as follows. Catalyzes the oxidation of erythronate-4-phosphate to 3-hydroxy-2-oxo-4-phosphonooxybutanoate. The chain is Erythronate-4-phosphate dehydrogenase from Coxiella burnetii (strain Dugway 5J108-111).